Reading from the N-terminus, the 379-residue chain is Actin, cytoplasmic (379 aa).

The protein belongs to the actin family.

The protein resides in the cytoplasm. It is found in the cytoskeleton. The catalysed reaction is ATP + H2O = ADP + phosphate + H(+). Its function is as follows. Actins are highly conserved proteins that are involved in various types of cell motility and are ubiquitously expressed in all eukaryotic cells. This Euplotes crassus protein is Actin, cytoplasmic.